Consider the following 204-residue polypeptide: CDP-archaeol synthase (204 aa).

Transmembrane regions (helical) follow at residues 5 to 25 (VYAC…YVIL), 43 to 63 (MLWV…SRLV), 91 to 111 (FEGF…LAYA), 116 to 136 (GVSA…GAFV), 147 to 167 (PAIL…QGLF), and 175 to 195 (VVVA…MAAF).

This sequence belongs to the CDP-archaeol synthase family. Mg(2+) serves as cofactor.

It is found in the cell membrane. It carries out the reaction 2,3-bis-O-(geranylgeranyl)-sn-glycerol 1-phosphate + CTP + H(+) = CDP-2,3-bis-O-(geranylgeranyl)-sn-glycerol + diphosphate. Its pathway is membrane lipid metabolism; glycerophospholipid metabolism. Catalyzes the formation of CDP-2,3-bis-(O-geranylgeranyl)-sn-glycerol (CDP-archaeol) from 2,3-bis-(O-geranylgeranyl)-sn-glycerol 1-phosphate (DGGGP) and CTP. This reaction is the third ether-bond-formation step in the biosynthesis of archaeal membrane lipids. The chain is CDP-archaeol synthase from Thermofilum pendens (strain DSM 2475 / Hrk 5).